The chain runs to 388 residues: MINKSNLIGLTCISFLSYALTGALITITGIFLENISKYFNIPITDMGNTFTFLNAGILSSIFISSWITNIINLKTQLIFGFILTIIATLILIFSHNLTYFSISMFMLGIISGITMSIGTYIITNLYTDQTRASMLLLTDSFFSMSGIIFPIITALIISNNMKWYWVYFIIGIIYLIIFLITINTKFPIIYTEISKKRIKTWNFSILCLSISALLYILGQLSFISWMPEYTMKYIHISINQSSKLVSAFWMAYMVGMWIFSFILKFFDLKKTIITLSGISLFLMSLFNIFYDYALLYIIILSLGFFSSAIYTIIITLASQQTPLSSPKTINYILTSGTVGTLLTFIITGPIVQKYGIFSALLVSNILYGIVFFLVIIFATLTKTKPIHD.

12 helical membrane-spanning segments follow: residues 12–32 (CISF…GIFL), 51–71 (TFLN…TNII), 77–97 (LIFG…SHNL), 102–122 (ISMF…TYII), 137–157 (LTDS…ALII), 163–183 (WYWV…ITIN), 203–223 (FSIL…LSFI), 246–266 (SAFW…LKFF), 272–292 (IITL…FYDY), 294–314 (LLYI…TIII), 331–351 (YILT…GPIV), and 356–376 (IFSA…LVII).

The protein belongs to the major facilitator superfamily. TsgA family.

It localises to the cell membrane. The chain is Protein TsgA homolog from Buchnera aphidicola subsp. Baizongia pistaciae (strain Bp).